The following is a 168-amino-acid chain: Transcriptional repressor NrdR (168 aa).

Positions 1–21 are disordered; it reads MQCPACRHTDSRVLESRSSES. A zinc finger lies at 3–34; sequence CPACRHTDSRVLESRSSESGRSVRRRRECLSC. Residues 7–20 show a composition bias toward basic and acidic residues; that stretch reads RHTDSRVLESRSSE. The 91-residue stretch at 49 to 139 folds into the ATP-cone domain; sequence ISVIKRNGDR…VYRQFRGVRD (91 aa).

The protein belongs to the NrdR family. Zn(2+) serves as cofactor.

In terms of biological role, negatively regulates transcription of bacterial ribonucleotide reductase nrd genes and operons by binding to NrdR-boxes. This Synechococcus elongatus (strain ATCC 33912 / PCC 7942 / FACHB-805) (Anacystis nidulans R2) protein is Transcriptional repressor NrdR.